The primary structure comprises 316 residues: MNDVSKTGLPKAIFLMGPTASGKTALAIRLRQTLPVELISVDSALVYKGMDIGTAKPDAHELSQAPHRLLDIIDPAQAYSAADFRRDALQAMAEIVAAGRIPLLVGGTMLYFKALLEGLSPLPSADPTIRAEIERQAAEQGWDALHRKLQDIDPVAAQRIHPNDPQRLSRALEVFFISGKTLTELTQTSGEALPYQVHQFAIAPASRELLHQRIEQRFHQMLASGFEAEVRALFARGDLHTDMPSVRCVGYRQMWSYLAGEISYDEMVYRGICATRQLAKRQITWLRGWEGVHWLDSEKPEQAYSDVLQVIGAKQQ.

Gly-17–Thr-24 lines the ATP pocket. Thr-19 to Thr-24 is a binding site for substrate. Interaction with substrate tRNA regions lie at residues Asp-42–Leu-45, Gln-166–Arg-170, Arg-247–Arg-252, and Lys-280–Arg-287.

Belongs to the IPP transferase family. As to quaternary structure, monomer. Requires Mg(2+) as cofactor.

The enzyme catalyses adenosine(37) in tRNA + dimethylallyl diphosphate = N(6)-dimethylallyladenosine(37) in tRNA + diphosphate. Its function is as follows. Catalyzes the transfer of a dimethylallyl group onto the adenine at position 37 in tRNAs that read codons beginning with uridine, leading to the formation of N6-(dimethylallyl)adenosine (i(6)A). This is tRNA dimethylallyltransferase from Cronobacter sakazakii (strain ATCC BAA-894) (Enterobacter sakazakii).